A 121-amino-acid chain; its full sequence is Securin (121 aa).

The tract at residues 1 to 24 is disordered; the sequence is RATEKSVKTNGPLKQKQTTFSAKK. 2 consecutive short sequence motifs (TEK-box) follow at residues 3–5 and 26–28; these read TEK. Positions 93–121 are disordered; it reads LGPPSPLNMPSPPWESDVLQSPSSILSTL. Positions 95–105 match the SH3-binding motif; sequence PPSPLNMPSPP. The span at 95 to 105 shows a compositional bias: pro residues; the sequence is PPSPLNMPSPP. A Phosphoserine; by CDK1 modification is found at S97. Positions 110 to 121 are enriched in polar residues; that stretch reads VLQSPSSILSTL.

Belongs to the securin family. As to quaternary structure, interacts with the caspase-like ESPL1, and prevents its protease activity probably by covering its active site. Interacts with p53/TP53 and blocks its activity probably by blocking its binding to DNA. Interacts with the Ku 70 kDa subunit of ds-DNA kinase. Interacts with PTTG1IP. Interacts with RPS10 and DNAJA1. Phosphorylated by CDK1 during mitosis. In terms of processing, phosphorylated in vitro by ds-DNA kinase. Post-translationally, ubiquitinated through 'Lys-11' linkage of ubiquitin moieties by the anaphase promoting complex (APC) at the onset of anaphase, conducting to its degradation. 'Lys-11'-linked ubiquitination is mediated by the E2 ligase UBE2C/UBCH10.

It is found in the cytoplasm. Its subcellular location is the nucleus. Its function is as follows. Regulatory protein, which plays a central role in chromosome stability, in the p53/TP53 pathway, and DNA repair. Probably acts by blocking the action of key proteins. During the mitosis, it blocks Separase/ESPL1 function, preventing the proteolysis of the cohesin complex and the subsequent segregation of the chromosomes. At the onset of anaphase, it is ubiquitinated, conducting to its destruction and to the liberation of ESPL1. Its function is however not limited to a blocking activity, since it is required to activate ESPL1. Negatively regulates the transcriptional activity and related apoptosis activity of p53/TP53. The negative regulation of p53/TP53 may explain the strong transforming capability of the protein when it is overexpressed. May also play a role in DNA repair via its interaction with Ku, possibly by connecting DNA damage-response pathways with sister chromatid separation. This chain is Securin (PTTG1), found in Sus scrofa (Pig).